Here is a 110-residue protein sequence, read N- to C-terminus: UPF0122 protein GK1195 (110 aa).

Belongs to the UPF0122 family.

Its function is as follows. Might take part in the signal recognition particle (SRP) pathway. This is inferred from the conservation of its genetic proximity to ftsY/ffh. May be a regulatory protein. The polypeptide is UPF0122 protein GK1195 (Geobacillus kaustophilus (strain HTA426)).